Here is a 316-residue protein sequence, read N- to C-terminus: Vacuolar morphogenesis protein 7 (316 aa).

The 124-residue stretch at 1-124 folds into the PX domain; the sequence is MAANSVGKMS…QDFLQLSKPN (124 aa). Residues 168-186 adopt a coiled-coil conformation; the sequence is RARTKLHKLRERLEQDVQK. One can recognise a t-SNARE coiled-coil homology domain in the interval 250 to 312; it reads MQMVRDQEQE…QIANKKARHF (63 aa).

In terms of assembly, possibly multimeric. Associates with VAM3.

Its subcellular location is the vacuole. Functionally, essential for proper morphogenesis of the vacuole. May exist as structural reinforcement on the surface of the vacuolar membrane and be required for maintenance against rupture by osmotic pressure. The sequence is that of Vacuolar morphogenesis protein 7 (VAM7) from Saccharomyces cerevisiae (strain ATCC 204508 / S288c) (Baker's yeast).